We begin with the raw amino-acid sequence, 108 residues long: Phosphoribosyl-ATP pyrophosphatase (108 aa).

Belongs to the PRA-PH family.

The protein resides in the cytoplasm. The enzyme catalyses 1-(5-phospho-beta-D-ribosyl)-ATP + H2O = 1-(5-phospho-beta-D-ribosyl)-5'-AMP + diphosphate + H(+). Its pathway is amino-acid biosynthesis; L-histidine biosynthesis; L-histidine from 5-phospho-alpha-D-ribose 1-diphosphate: step 2/9. This chain is Phosphoribosyl-ATP pyrophosphatase, found in Thiobacillus denitrificans (strain ATCC 25259 / T1).